The following is a 328-amino-acid chain: MPVVHCSSNLPITPYIYERLVYFIKASSISSCISDNLLLVNKTFNDGGCPPHINFCNDEIINPTAGQTVVELVLNAKKGELGSGYLAVDHGKKVVILAFRGSTTRQDWFSDFEIYPVNYSPLCVKEYRKLIEEGKIRECEGCKMHRGFLRFTETLGMDVFKKMESILESFPEYRIVVTGHSLGAALASLAGIELKIRGFDPLVLTFATPKIFNSEMKQWVDELFETDAIEKESILKDEIQFRKGYFRVVHTGDYIPMVPPFYHPAGLEMFINKVGLPQNAEDIEYRGKNNRLTLKDGFREGMSGLVEDWLHVYEHRAYFIDVVGCSGL.

Ser181 functions as the Nucleophile in the catalytic mechanism. Residues Asp253 and His315 each act as charge relay system in the active site.

It belongs to the AB hydrolase superfamily. Lipase family.

It carries out the reaction a triacylglycerol + H2O = a diacylglycerol + a fatty acid + H(+). Its function is as follows. Lipases catalyze the hydrolysis of the ester bond of tri-, di- and monoglycerides of long-chain fatty acids into fatty acids and glycerol. This is Putative lipase LIH1 from Saccharomyces cerevisiae (strain ATCC 204508 / S288c) (Baker's yeast).